The sequence spans 172 residues: Peptide deformylase-like (172 aa).

The active site involves Glu-134.

This sequence belongs to the polypeptide deformylase family.

This chain is Peptide deformylase-like, found in Rhizobium meliloti (strain 1021) (Ensifer meliloti).